A 505-amino-acid polypeptide reads, in one-letter code: Cyclin-dependent kinase C-1 (505 aa).

The 300-residue stretch at 26–325 (FEKLEQIGEG…AKDALDAEYF (300 aa)) folds into the Protein kinase domain. Residues 32 to 40 (IGEGTYGQV) and lysine 55 each bind ATP. The residue at position 37 (tyrosine 37) is a Phosphotyrosine. The active-site Proton acceptor is aspartate 164. Threonine 198 carries the phosphothreonine modification. The segment at 336-505 (SLPTYESSHE…QRNQQYGWQQ (170 aa)) is disordered. A compositionally biased stretch (low complexity) spans 429–456 (PPSGNQSGGYNQSRGGYSSGSYPPQGRG). A compositionally biased stretch (gly residues) spans 482–491 (GQYGGSGSSG). The segment covering 492–505 (RGQNQRNQQYGWQQ) has biased composition (low complexity).

This sequence belongs to the protein kinase superfamily. CMGC Ser/Thr protein kinase family. CDC2/CDKX subfamily. Interacts with CYCT1-3. As to expression, highly expressed in flowers. Expressed in seedlings, roots, rosettes and stems.

The enzyme catalyses L-seryl-[protein] + ATP = O-phospho-L-seryl-[protein] + ADP + H(+). It catalyses the reaction L-threonyl-[protein] + ATP = O-phospho-L-threonyl-[protein] + ADP + H(+). It carries out the reaction [DNA-directed RNA polymerase] + ATP = phospho-[DNA-directed RNA polymerase] + ADP + H(+). This is Cyclin-dependent kinase C-1 (CDKC-1) from Arabidopsis thaliana (Mouse-ear cress).